A 208-amino-acid polypeptide reads, in one-letter code: Mitochondrial import inner membrane translocase subunit Tim23 (208 aa).

The next 3 helical transmembrane spans lie at Phe73–Leu93, Ala125–Ile145, and Gly173–Leu193.

Belongs to the Tim17/Tim22/Tim23 family. Component of the TIM23 complex at least composed of timm23, timm17 and timm50. The complex interacts with the timm44 component of the PAM complex.

The protein resides in the mitochondrion inner membrane. Its function is as follows. Essential component of the TIM23 complex, a complex that mediates the translocation of transit peptide-containing proteins across the mitochondrial inner membrane. Plays an essential role in early embryonic development. The polypeptide is Mitochondrial import inner membrane translocase subunit Tim23 (timm23) (Danio rerio (Zebrafish)).